Reading from the N-terminus, the 120-residue chain is Aspartate 1-decarboxylase (120 aa).

Catalysis depends on Ser-25, which acts as the Schiff-base intermediate with substrate; via pyruvic acid. Position 25 is a pyruvic acid (Ser) (Ser-25). Residue Thr-57 participates in substrate binding. Catalysis depends on Tyr-58, which acts as the Proton donor. A substrate-binding site is contributed by Gly-73–Ala-75.

It belongs to the PanD family. Heterooctamer of four alpha and four beta subunits. Pyruvate serves as cofactor. Is synthesized initially as an inactive proenzyme, which is activated by self-cleavage at a specific serine bond to produce a beta-subunit with a hydroxyl group at its C-terminus and an alpha-subunit with a pyruvoyl group at its N-terminus.

Its subcellular location is the cytoplasm. It catalyses the reaction L-aspartate + H(+) = beta-alanine + CO2. It participates in cofactor biosynthesis; (R)-pantothenate biosynthesis; beta-alanine from L-aspartate: step 1/1. Functionally, catalyzes the pyruvoyl-dependent decarboxylation of aspartate to produce beta-alanine. The protein is Aspartate 1-decarboxylase of Polynucleobacter asymbioticus (strain DSM 18221 / CIP 109841 / QLW-P1DMWA-1) (Polynucleobacter necessarius subsp. asymbioticus).